A 363-amino-acid chain; its full sequence is 3-isopropylmalate dehydrogenase (363 aa).

An NAD(+)-binding site is contributed by glycine 78–glutamate 91. Arginine 99, arginine 109, arginine 138, and aspartate 227 together coordinate substrate. Mg(2+) is bound by residues aspartate 227, aspartate 251, and aspartate 255. NAD(+) is bound at residue glycine 285–asparagine 297.

It belongs to the isocitrate and isopropylmalate dehydrogenases family. LeuB type 1 subfamily. In terms of assembly, homodimer. Mg(2+) is required as a cofactor. Requires Mn(2+) as cofactor.

Its subcellular location is the cytoplasm. The catalysed reaction is (2R,3S)-3-isopropylmalate + NAD(+) = 4-methyl-2-oxopentanoate + CO2 + NADH. The protein operates within amino-acid biosynthesis; L-leucine biosynthesis; L-leucine from 3-methyl-2-oxobutanoate: step 3/4. Catalyzes the oxidation of 3-carboxy-2-hydroxy-4-methylpentanoate (3-isopropylmalate) to 3-carboxy-4-methyl-2-oxopentanoate. The product decarboxylates to 4-methyl-2 oxopentanoate. The sequence is that of 3-isopropylmalate dehydrogenase from Yersinia pestis.